The chain runs to 26 residues: Mu-theraphotoxin-Phlo2a (26 aa).

3 disulfides stabilise this stretch: cysteine 2–cysteine 16, cysteine 9–cysteine 21, and cysteine 15–cysteine 25.

The protein belongs to the neurotoxin 30 (phrixotoxin) family. In terms of tissue distribution, expressed by the venom gland.

It localises to the secreted. Gating-modifier toxin that non-selectively inhibits voltage-gated sodium channel Nav by shifting the threshold for channel activation to more positive potentials. This toxin moderately inhibits human Nav1.2/SCN2A (IC(50)=404 nM), Nav1.5/SCN5A (IC(50)=218 nM) and Nav1.7/SCN9A (IC(50)=333 nM). Inhibition of Nav1.7 is voltage-dependent, with lower inhibition at more positive test pulses. This chain is Mu-theraphotoxin-Phlo2a, found in Phlogius sp. (Tarantula spider).